The primary structure comprises 207 residues: Large ribosomal subunit protein uL4 (207 aa).

It belongs to the universal ribosomal protein uL4 family. Part of the 50S ribosomal subunit.

One of the primary rRNA binding proteins, this protein initially binds near the 5'-end of the 23S rRNA. It is important during the early stages of 50S assembly. It makes multiple contacts with different domains of the 23S rRNA in the assembled 50S subunit and ribosome. In terms of biological role, forms part of the polypeptide exit tunnel. The sequence is that of Large ribosomal subunit protein uL4 from Rickettsia conorii (strain ATCC VR-613 / Malish 7).